Reading from the N-terminus, the 102-residue chain is Small ribosomal subunit protein uS10 (102 aa).

It belongs to the universal ribosomal protein uS10 family. As to quaternary structure, part of the 30S ribosomal subunit.

Involved in the binding of tRNA to the ribosomes. This chain is Small ribosomal subunit protein uS10, found in Finegoldia magna (strain ATCC 29328 / DSM 20472 / WAL 2508) (Peptostreptococcus magnus).